The chain runs to 456 residues: tRNA modification GTPase MnmE (456 aa).

3 residues coordinate (6S)-5-formyl-5,6,7,8-tetrahydrofolate: Arg-25, Glu-82, and Lys-121. The TrmE-type G domain maps to 217–379 (GMKVVIAGRP…LKAHLKSVMG (163 aa)). A K(+)-binding site is contributed by Asn-227. GTP contacts are provided by residues 227–232 (NAGKSS), 246–252 (TNIAGTT), and 271–274 (DTAG). Ser-231 provides a ligand contact to Mg(2+). K(+)-binding residues include Thr-246, Ile-248, and Thr-251. Thr-252 contacts Mg(2+). (6S)-5-formyl-5,6,7,8-tetrahydrofolate is bound at residue Lys-456.

It belongs to the TRAFAC class TrmE-Era-EngA-EngB-Septin-like GTPase superfamily. TrmE GTPase family. Homodimer. Heterotetramer of two MnmE and two MnmG subunits. K(+) serves as cofactor.

The protein localises to the cytoplasm. Functionally, exhibits a very high intrinsic GTPase hydrolysis rate. Involved in the addition of a carboxymethylaminomethyl (cmnm) group at the wobble position (U34) of certain tRNAs, forming tRNA-cmnm(5)s(2)U34. The polypeptide is tRNA modification GTPase MnmE (Saccharophagus degradans (strain 2-40 / ATCC 43961 / DSM 17024)).